The sequence spans 360 residues: ACT1-like protein (360 aa).

The tract at residues 339–360 is disordered; that stretch reads KKQSHNNANDHHEDSMNYSITQ.

In terms of assembly, interacts with the receptor complex composed of ilcr-1 and ilcr-2. Also interacts with pik-1. As to expression, expressed in neurons.

Functionally, may act as an adapter to facilitate downstream signaling for the receptor complex composed of ilcr-1 and ilcr-2, which is a signaling complex that modulates neuronal activity and animal behavior in response to sensory neuron input. This is ACT1-like protein from Caenorhabditis elegans.